Here is a 377-residue protein sequence, read N- to C-terminus: Chaperone protein DnaJ (377 aa).

The 66-residue stretch at 5–70 folds into the J domain; the sequence is DYYEILGVSR…QKRAAYDQYG (66 aa). The segment at 132-210 adopts a CR-type zinc-finger fold; it reads GVTKEIRIPT…CHGHGRIEKS (79 aa). Zn(2+) contacts are provided by Cys-145, Cys-148, Cys-162, Cys-165, Cys-184, Cys-187, Cys-198, and Cys-201. CXXCXGXG motif repeat units follow at residues 145 to 152, 162 to 169, 184 to 191, and 198 to 205; these read CDVCHGSG, CPTCHGAG, CPHCHGRG, and CNKCHGHG.

It belongs to the DnaJ family. Homodimer. It depends on Zn(2+) as a cofactor.

The protein resides in the cytoplasm. Participates actively in the response to hyperosmotic and heat shock by preventing the aggregation of stress-denatured proteins and by disaggregating proteins, also in an autonomous, DnaK-independent fashion. Unfolded proteins bind initially to DnaJ; upon interaction with the DnaJ-bound protein, DnaK hydrolyzes its bound ATP, resulting in the formation of a stable complex. GrpE releases ADP from DnaK; ATP binding to DnaK triggers the release of the substrate protein, thus completing the reaction cycle. Several rounds of ATP-dependent interactions between DnaJ, DnaK and GrpE are required for fully efficient folding. Also involved, together with DnaK and GrpE, in the DNA replication of plasmids through activation of initiation proteins. This chain is Chaperone protein DnaJ, found in Edwardsiella ictaluri (strain 93-146).